Here is a 494-residue protein sequence, read N- to C-terminus: Glycerol kinase (494 aa).

Thr13 contributes to the ADP binding site. ATP contacts are provided by Thr13, Thr14, and Ser15. Position 13 (Thr13) interacts with sn-glycerol 3-phosphate. Arg17 lines the ADP pocket. Sn-glycerol 3-phosphate is bound by residues Arg83, Glu84, Tyr135, and Asp244. Residues Arg83, Glu84, Tyr135, Asp244, and Gln245 each coordinate glycerol. Thr266 and Gly309 together coordinate ADP. Residues Thr266, Gly309, Gln313, and Gly410 each coordinate ATP. 2 residues coordinate ADP: Gly410 and Asn414.

This sequence belongs to the FGGY kinase family.

It catalyses the reaction glycerol + ATP = sn-glycerol 3-phosphate + ADP + H(+). It participates in polyol metabolism; glycerol degradation via glycerol kinase pathway; sn-glycerol 3-phosphate from glycerol: step 1/1. With respect to regulation, inhibited by fructose 1,6-bisphosphate (FBP). Functionally, key enzyme in the regulation of glycerol uptake and metabolism. Catalyzes the phosphorylation of glycerol to yield sn-glycerol 3-phosphate. The polypeptide is Glycerol kinase (Shewanella baltica (strain OS223)).